Here is a 363-residue protein sequence, read N- to C-terminus: UDP-N-acetylglucosamine--N-acetylmuramyl-(pentapeptide) pyrophosphoryl-undecaprenol N-acetylglucosamine transferase (363 aa).

Residues 14-16 (TGG), Asn-122, Arg-163, Ser-190, and Gln-285 contribute to the UDP-N-acetyl-alpha-D-glucosamine site.

This sequence belongs to the glycosyltransferase 28 family. MurG subfamily.

It localises to the cell inner membrane. It carries out the reaction di-trans,octa-cis-undecaprenyl diphospho-N-acetyl-alpha-D-muramoyl-L-alanyl-D-glutamyl-meso-2,6-diaminopimeloyl-D-alanyl-D-alanine + UDP-N-acetyl-alpha-D-glucosamine = di-trans,octa-cis-undecaprenyl diphospho-[N-acetyl-alpha-D-glucosaminyl-(1-&gt;4)]-N-acetyl-alpha-D-muramoyl-L-alanyl-D-glutamyl-meso-2,6-diaminopimeloyl-D-alanyl-D-alanine + UDP + H(+). The protein operates within cell wall biogenesis; peptidoglycan biosynthesis. Cell wall formation. Catalyzes the transfer of a GlcNAc subunit on undecaprenyl-pyrophosphoryl-MurNAc-pentapeptide (lipid intermediate I) to form undecaprenyl-pyrophosphoryl-MurNAc-(pentapeptide)GlcNAc (lipid intermediate II). The sequence is that of UDP-N-acetylglucosamine--N-acetylmuramyl-(pentapeptide) pyrophosphoryl-undecaprenol N-acetylglucosamine transferase from Prochlorococcus marinus (strain MIT 9301).